The primary structure comprises 475 residues: tRNA-2-methylthio-N(6)-dimethylallyladenosine synthase (475 aa).

Over residues 1–10 (MHETTLKREG) the composition is skewed to basic and acidic residues. Positions 1 to 25 (MHETTLKREGASTPSNPTPSTHAAG) are disordered. Residues 12-23 (STPSNPTPSTHA) are compositionally biased toward polar residues. An MTTase N-terminal domain is found at 27–144 (GKIYIRTFGC…LPELIRRRRD (118 aa)). [4Fe-4S] cluster contacts are provided by C36, C73, C107, C181, C185, and C188. Residues 167-400 (RVEGATAFVS…QALINEQAAA (234 aa)) enclose the Radical SAM core domain. In terms of domain architecture, TRAM spans 403-466 (QSMVGTRQRL…TNSLRGRVAG (64 aa)).

This sequence belongs to the methylthiotransferase family. MiaB subfamily. As to quaternary structure, monomer. Requires [4Fe-4S] cluster as cofactor.

The protein resides in the cytoplasm. The catalysed reaction is N(6)-dimethylallyladenosine(37) in tRNA + (sulfur carrier)-SH + AH2 + 2 S-adenosyl-L-methionine = 2-methylsulfanyl-N(6)-dimethylallyladenosine(37) in tRNA + (sulfur carrier)-H + 5'-deoxyadenosine + L-methionine + A + S-adenosyl-L-homocysteine + 2 H(+). Catalyzes the methylthiolation of N6-(dimethylallyl)adenosine (i(6)A), leading to the formation of 2-methylthio-N6-(dimethylallyl)adenosine (ms(2)i(6)A) at position 37 in tRNAs that read codons beginning with uridine. This is tRNA-2-methylthio-N(6)-dimethylallyladenosine synthase from Bordetella avium (strain 197N).